Reading from the N-terminus, the 335-residue chain is Pyridoxal 5'-phosphate synthase subunit PdxS (335 aa).

A D-ribose 5-phosphate-binding site is contributed by aspartate 59. Lysine 116 functions as the Schiff-base intermediate with D-ribose 5-phosphate in the catalytic mechanism. Glycine 188 is a binding site for D-ribose 5-phosphate. Lysine 200 is a D-glyceraldehyde 3-phosphate binding site. D-ribose 5-phosphate contacts are provided by residues glycine 253 and 274–275 (GS).

The protein belongs to the PdxS/SNZ family. As to quaternary structure, in the presence of PdxT, forms a dodecamer of heterodimers.

It catalyses the reaction aldehydo-D-ribose 5-phosphate + D-glyceraldehyde 3-phosphate + L-glutamine = pyridoxal 5'-phosphate + L-glutamate + phosphate + 3 H2O + H(+). The protein operates within cofactor biosynthesis; pyridoxal 5'-phosphate biosynthesis. In terms of biological role, catalyzes the formation of pyridoxal 5'-phosphate from ribose 5-phosphate (RBP), glyceraldehyde 3-phosphate (G3P) and ammonia. The ammonia is provided by the PdxT subunit. Can also use ribulose 5-phosphate and dihydroxyacetone phosphate as substrates, resulting from enzyme-catalyzed isomerization of RBP and G3P, respectively. The protein is Pyridoxal 5'-phosphate synthase subunit PdxS of Hyperthermus butylicus (strain DSM 5456 / JCM 9403 / PLM1-5).